Consider the following 328-residue polypeptide: E3 ubiquitin-protein ligase SINA-like 5 (328 aa).

The disordered stretch occupies residues 1 to 77; the sequence is MARSGGNDGH…GSPKSSQPVK (77 aa). Composition is skewed to acidic residues over residues 10 to 20 and 27 to 62; these read HEEELDPELFE and GYED…ENVT. Over residues 63–77 the composition is skewed to polar residues; it reads TDEQSGSPKSSQPVK. The segment at 86–122 adopts an RING-type; degenerate zinc-finger fold; sequence CPTCCEPLKRPIYQCSNGHLACSSCCQKLNKKCSFCR. The tract at residues 136–324 is SBD; sequence VIEASIVPCP…MQICIAYGYK (189 aa). An SIAH-type; degenerate zinc finger spans residues 139–197; the sequence is ASIVPCPNAKHGCKETTTYCNQSSHEKVCKFVRCSCPVSNCNYVSSYSNLKSHACSTAH. The Zn(2+) site is built by C144, C151, H163, C167, C174, C179, H191, and H197.

This sequence belongs to the SINA (Seven in absentia) family.

The catalysed reaction is S-ubiquitinyl-[E2 ubiquitin-conjugating enzyme]-L-cysteine + [acceptor protein]-L-lysine = [E2 ubiquitin-conjugating enzyme]-L-cysteine + N(6)-ubiquitinyl-[acceptor protein]-L-lysine.. Its pathway is protein modification; protein ubiquitination. In terms of biological role, E3 ubiquitin-protein ligase that mediates ubiquitination and subsequent proteasomal degradation of target proteins. E3 ubiquitin ligases accept ubiquitin from an E2 ubiquitin-conjugating enzyme in the form of a thioester and then directly transfers the ubiquitin to targeted substrates. It probably triggers the ubiquitin-mediated degradation of different substrates. This Arabidopsis thaliana (Mouse-ear cress) protein is E3 ubiquitin-protein ligase SINA-like 5.